The chain runs to 579 residues: V-type ATP synthase alpha chain (579 aa).

Residue 227-234 (GGFGTGKT) participates in ATP binding.

The protein belongs to the ATPase alpha/beta chains family.

It carries out the reaction ATP + H2O + 4 H(+)(in) = ADP + phosphate + 5 H(+)(out). Its function is as follows. Produces ATP from ADP in the presence of a proton gradient across the membrane. The V-type alpha chain is a catalytic subunit. The polypeptide is V-type ATP synthase alpha chain (Anaeromyxobacter sp. (strain K)).